We begin with the raw amino-acid sequence, 334 residues long: DNA-directed RNA polymerase subunit alpha (334 aa).

The interval 1–234 (MQRSVHELLT…QQLAVFVDFD (234 aa)) is alpha N-terminal domain (alpha-NTD). The interval 248 to 334 (IDPILLRPVD…LRGDDRVLGG (87 aa)) is alpha C-terminal domain (alpha-CTD).

This sequence belongs to the RNA polymerase alpha chain family. In terms of assembly, homodimer. The RNAP catalytic core consists of 2 alpha, 1 beta, 1 beta' and 1 omega subunit. When a sigma factor is associated with the core the holoenzyme is formed, which can initiate transcription.

The enzyme catalyses RNA(n) + a ribonucleoside 5'-triphosphate = RNA(n+1) + diphosphate. Its function is as follows. DNA-dependent RNA polymerase catalyzes the transcription of DNA into RNA using the four ribonucleoside triphosphates as substrates. The sequence is that of DNA-directed RNA polymerase subunit alpha from Marinobacter nauticus (strain ATCC 700491 / DSM 11845 / VT8) (Marinobacter aquaeolei).